The following is a 245-amino-acid chain: Probable octanoyltransferase 2 (245 aa).

Residues 38–227 (MEYKPVLYFQ…SIEKEFDIKE (190 aa)) enclose the BPL/LPL catalytic domain. Residues 89 to 96 (RGGYETYH), 157 to 159 (SIG), and 170 to 172 (GMA) contribute to the substrate site. Cys-188 serves as the catalytic Acyl-thioester intermediate.

It belongs to the LipB family.

The protein resides in the cytoplasm. The enzyme catalyses octanoyl-[ACP] + L-lysyl-[protein] = N(6)-octanoyl-L-lysyl-[protein] + holo-[ACP] + H(+). It participates in protein modification; protein lipoylation via endogenous pathway; protein N(6)-(lipoyl)lysine from octanoyl-[acyl-carrier-protein]: step 1/2. Catalyzes the transfer of endogenously produced octanoic acid from octanoyl-acyl-carrier-protein onto the lipoyl domains of lipoate-dependent enzymes. Lipoyl-ACP can also act as a substrate although octanoyl-ACP is likely to be the physiological substrate. The protein is Probable octanoyltransferase 2 of Picrophilus torridus (strain ATCC 700027 / DSM 9790 / JCM 10055 / NBRC 100828 / KAW 2/3).